Reading from the N-terminus, the 362-residue chain is Alpha-tubulin N-acetyltransferase (362 aa).

In terms of domain architecture, N-acetyltransferase spans 1-177 (MQFGCNVAEA…NNFLMLDASI (177 aa)). Residues 111–124 (FYTH…GIGT) and 147–156 (SPKLLAFLSK) contribute to the acetyl-CoA site.

This sequence belongs to the acetyltransferase ATAT1 family.

It carries out the reaction L-lysyl-[alpha-tubulin] + acetyl-CoA = N(6)-acetyl-L-lysyl-[alpha-tubulin] + CoA + H(+). Its function is as follows. Specifically acetylates 'Lys-40' in alpha-tubulin on the lumenal side of microtubules. Promotes microtubule destabilization and accelerates microtubule dynamics; this activity may be independent of acetylation activity. Acetylates alpha-tubulin with a slow enzymatic rate, due to a catalytic site that is not optimized for acetyl transfer. Enters the microtubule through each end and diffuses quickly throughout the lumen of microtubules. Acetylates only long/old microtubules because of its slow acetylation rate since it does not have time to act on dynamically unstable microtubules before the enzyme is released. This Giardia intestinalis (strain ATCC 50803 / WB clone C6) (Giardia lamblia) protein is Alpha-tubulin N-acetyltransferase.